Consider the following 420-residue polypeptide: UDP-N-acetylglucosamine 1-carboxyvinyltransferase 1 (420 aa).

22-23 (KN) provides a ligand contact to phosphoenolpyruvate. UDP-N-acetyl-alpha-D-glucosamine is bound at residue R91. C115 serves as the catalytic Proton donor. C115 is subject to 2-(S-cysteinyl)pyruvic acid O-phosphothioketal. Residues 120–124 (RPMDL), D303, and V325 contribute to the UDP-N-acetyl-alpha-D-glucosamine site.

The protein belongs to the EPSP synthase family. MurA subfamily.

The protein localises to the cytoplasm. The catalysed reaction is phosphoenolpyruvate + UDP-N-acetyl-alpha-D-glucosamine = UDP-N-acetyl-3-O-(1-carboxyvinyl)-alpha-D-glucosamine + phosphate. It participates in cell wall biogenesis; peptidoglycan biosynthesis. Its function is as follows. Cell wall formation. Adds enolpyruvyl to UDP-N-acetylglucosamine. This is UDP-N-acetylglucosamine 1-carboxyvinyltransferase 1 from Carboxydothermus hydrogenoformans (strain ATCC BAA-161 / DSM 6008 / Z-2901).